Here is a 391-residue protein sequence, read N- to C-terminus: BRCA1-A complex subunit Abraxas 1 (391 aa).

The region spanning Val8–Ile156 is the MPN domain. Residues Leu223–His261 adopt a coiled-coil conformation. The segment at Gln354–Phe391 is disordered. Residues Glu367 to Phe391 are compositionally biased toward polar residues. Ser388 carries the post-translational modification Phosphoserine. The pSXXF motif motif lies at Ser388 to Phe391.

This sequence belongs to the FAM175 family. Abraxas subfamily. As to quaternary structure, component of the ARISC complex. Component of the BRCA1-A complex. Homodimer. Post-translationally, phosphorylation of Ser-388 of the pSXXF motif by ATM or ATR constitutes a specific recognition motif for the BRCT domain of BRCA1.

It localises to the nucleus. Functionally, involved in DNA damage response and double-strand break (DSB) repair. Component of the BRCA1-A complex, acting as a central scaffold protein that assembles the various components of the complex. The BRCA1-A complex specifically recognizes 'Lys-63'-linked ubiquitinated histones H2A and H2AX at DNA lesion sites. This complex also possesses deubiquitinase activity that specifically removes 'Lys-63'-linked ubiquitin on histones H2A and H2AX. In Danio rerio (Zebrafish), this protein is BRCA1-A complex subunit Abraxas 1.